Consider the following 466-residue polypeptide: UDP-N-acetylmuramoylalanine--D-glutamate ligase (466 aa).

121–127 (GTNGKST) is a binding site for ATP.

This sequence belongs to the MurCDEF family.

The protein resides in the cytoplasm. It catalyses the reaction UDP-N-acetyl-alpha-D-muramoyl-L-alanine + D-glutamate + ATP = UDP-N-acetyl-alpha-D-muramoyl-L-alanyl-D-glutamate + ADP + phosphate + H(+). It participates in cell wall biogenesis; peptidoglycan biosynthesis. Functionally, cell wall formation. Catalyzes the addition of glutamate to the nucleotide precursor UDP-N-acetylmuramoyl-L-alanine (UMA). The sequence is that of UDP-N-acetylmuramoylalanine--D-glutamate ligase from Nitrobacter winogradskyi (strain ATCC 25391 / DSM 10237 / CIP 104748 / NCIMB 11846 / Nb-255).